The sequence spans 327 residues: tRNA dimethylallyltransferase (327 aa).

Residue 18–25 (GPTASGKT) participates in ATP binding. 20-25 (TASGKT) serves as a coordination point for substrate. 3 interaction with substrate tRNA regions span residues 43–46 (DSAL), 167–171 (QRVQR), and 251–256 (RCVGYR).

This sequence belongs to the IPP transferase family. In terms of assembly, monomer. It depends on Mg(2+) as a cofactor.

It catalyses the reaction adenosine(37) in tRNA + dimethylallyl diphosphate = N(6)-dimethylallyladenosine(37) in tRNA + diphosphate. Its function is as follows. Catalyzes the transfer of a dimethylallyl group onto the adenine at position 37 in tRNAs that read codons beginning with uridine, leading to the formation of N6-(dimethylallyl)adenosine (i(6)A). The polypeptide is tRNA dimethylallyltransferase (Methylibium petroleiphilum (strain ATCC BAA-1232 / LMG 22953 / PM1)).